A 189-amino-acid chain; its full sequence is Anthranilate synthase component 2 (189 aa).

Residues 1–189 (MILIIDNYDS…QLLRNFLEYS (189 aa)) enclose the Glutamine amidotransferase type-1 domain. 52–54 (GPG) contacts L-glutamine. C79 (nucleophile; for GATase activity) is an active-site residue. Residues Q83 and 129 to 130 (SL) each bind L-glutamine. Active-site residues include H169 and E171.

Tetramer of two components I and two components II.

The protein resides in the plastid. The protein localises to the chloroplast. The enzyme catalyses chorismate + L-glutamine = anthranilate + pyruvate + L-glutamate + H(+). It functions in the pathway amino-acid biosynthesis; L-tryptophan biosynthesis; L-tryptophan from chorismate: step 1/5. This chain is Anthranilate synthase component 2 (trpG), found in Pyropia yezoensis (Susabi-nori).